Consider the following 367-residue polypeptide: tRNA/tmRNA (uracil-C(5))-methyltransferase (367 aa).

Residues Gln-190, Tyr-218, Asn-223, Glu-239, and Asp-299 each contribute to the S-adenosyl-L-methionine site. Cys-324 functions as the Nucleophile in the catalytic mechanism. Glu-358 acts as the Proton acceptor in catalysis.

This sequence belongs to the class I-like SAM-binding methyltransferase superfamily. RNA M5U methyltransferase family. TrmA subfamily.

It carries out the reaction uridine(54) in tRNA + S-adenosyl-L-methionine = 5-methyluridine(54) in tRNA + S-adenosyl-L-homocysteine + H(+). The enzyme catalyses uridine(341) in tmRNA + S-adenosyl-L-methionine = 5-methyluridine(341) in tmRNA + S-adenosyl-L-homocysteine + H(+). Functionally, dual-specificity methyltransferase that catalyzes the formation of 5-methyluridine at position 54 (m5U54) in all tRNAs, and that of position 341 (m5U341) in tmRNA (transfer-mRNA). The sequence is that of tRNA/tmRNA (uracil-C(5))-methyltransferase from Dickeya chrysanthemi (strain Ech1591) (Dickeya zeae (strain Ech1591)).